Reading from the N-terminus, the 246-residue chain is Protein 3F (246 aa).

The signal sequence occupies residues Met-1 to Ala-19. Asn-52 carries N-linked (GlcNAc...) asparagine glycosylation. Over residues Glu-113–Ala-124 the composition is skewed to basic and acidic residues. The segment at Glu-113 to Ala-223 is disordered. Positions Ala-126–Ser-145 are enriched in polar residues. Repeat copies occupy residues Ser-145–Ala-153, Ser-154–Ala-162, and Ser-163–Ala-171. Positions Ser-145–Asp-176 are 3.5 X 9 AA tandem repeats of S-P-K-[ST]-D-A-K-E-A. Residues Pro-146–Thr-177 show a composition bias toward basic and acidic residues. A 4; truncated repeat occupies Ser-172–Asp-176. The span at Ser-181–Asn-213 shows a compositional bias: low complexity.

This Dictyostelium discoideum (Social amoeba) protein is Protein 3F (pspG).